A 398-amino-acid polypeptide reads, in one-letter code: Serine/threonine-protein kinase ppk23 (398 aa).

A Protein kinase domain is found at 74–359 (YEILEKIEEG…AKEALEHPYF (286 aa)). ATP-binding positions include 80–88 (IEEGSYGIV) and Lys-103. Catalysis depends on Asp-198, which acts as the Proton acceptor. A disordered region spans residues 359–398 (FYESPRPKDPKFFPTFPSKAKGESKEKNVFQSFRSASPKK). A compositionally biased stretch (polar residues) spans 387 to 398 (VFQSFRSASPKK).

Belongs to the protein kinase superfamily. Ser/Thr protein kinase family.

It localises to the nucleus. It catalyses the reaction L-seryl-[protein] + ATP = O-phospho-L-seryl-[protein] + ADP + H(+). The enzyme catalyses L-threonyl-[protein] + ATP = O-phospho-L-threonyl-[protein] + ADP + H(+). The protein is Serine/threonine-protein kinase ppk23 (ppk23) of Schizosaccharomyces pombe (strain 972 / ATCC 24843) (Fission yeast).